Consider the following 383-residue polypeptide: Succinyl-diaminopimelate desuccinylase (383 aa).

Histidine 79 is a Zn(2+) binding site. The active site involves aspartate 81. A Zn(2+)-binding site is contributed by aspartate 110. Catalysis depends on glutamate 141, which acts as the Proton acceptor. Zn(2+) is bound by residues glutamate 142, glutamate 170, and histidine 355.

The protein belongs to the peptidase M20A family. DapE subfamily. As to quaternary structure, homodimer. Requires Zn(2+) as cofactor. The cofactor is Co(2+).

The catalysed reaction is N-succinyl-(2S,6S)-2,6-diaminopimelate + H2O = (2S,6S)-2,6-diaminopimelate + succinate. It participates in amino-acid biosynthesis; L-lysine biosynthesis via DAP pathway; LL-2,6-diaminopimelate from (S)-tetrahydrodipicolinate (succinylase route): step 3/3. In terms of biological role, catalyzes the hydrolysis of N-succinyl-L,L-diaminopimelic acid (SDAP), forming succinate and LL-2,6-diaminopimelate (DAP), an intermediate involved in the bacterial biosynthesis of lysine and meso-diaminopimelic acid, an essential component of bacterial cell walls. This is Succinyl-diaminopimelate desuccinylase from Helicobacter pylori (strain Shi470).